A 1087-amino-acid chain; its full sequence is Period circadian protein (1087 aa).

Residues 1–14 (MEGESTESTHNTKV) show a composition bias toward polar residues. 2 disordered regions span residues 1-98 (MEGE…EQTE) and 123-153 (GAPT…QAEQ). Low complexity predominate over residues 15 to 46 (SDSAYSNSCSNSQSQRSGSSKSRLSGSHSSGS). The short motif at 65-78 (KRNKDKSRKKKKAK) is the Nuclear localization signal element. A compositionally biased stretch (basic residues) spans 65–78 (KRNKDKSRKKKKAK). A compositionally biased stretch (low complexity) spans 79–93 (SPAQATAATTTTIKS). The span at 129 to 140 (DAHDAHGDKPQL) shows a compositional bias: basic and acidic residues. Positions 141-150 (DVDEQQDDPQ) are enriched in acidic residues. PAS domains are found at residues 220–355 (DSFC…ATPI) and 373–479 (FAIQ…RVFQ). Disordered regions lie at residues 613-692 (PVTA…NPLP), 736-759 (MPEY…WEGD), 871-893 (SSAS…QPEA), and 956-1087 (TTTQ…HGDG). Positions 655-664 (NLTTASNVRM) are enriched in polar residues. The segment covering 665-689 (SSVTNTSNTGTGTSGGENSASGSSN) has biased composition (low complexity). 2 stretches are compositionally biased toward polar residues: residues 877-892 (QHSP…SQPE) and 1003-1024 (LPST…NNPK). Residues 1028–1047 (DSNGNSDDMDGSSFSSFYSS) are compositionally biased toward low complexity. Basic and acidic residues predominate over residues 1060 to 1087 (DNEKETKVHKLKPIVEHPEEDQTQHGDG).

In terms of assembly, forms a heterodimer with timeless (TIM); the complex then translocates into the nucleus. Phosphorylated with a circadian rhythmicity, probably by the double-time protein (dbt). Phosphorylation could be implicated in the stability of per monomer and in the formation of heterodimer per-tim.

Its subcellular location is the nucleus. The protein localises to the cytoplasm. The protein resides in the perinuclear region. Functionally, essential for biological clock functions. Determines the period length of circadian and ultradian rhythms; an increase in PER dosage leads to shortened circadian rhythms and a decrease leads to lengthened circadian rhythms. Essential for the circadian rhythmicity of locomotor activity, eclosion behavior, and for the rhythmic component of the male courtship song that originates in the thoracic nervous system. The biological cycle depends on the rhythmic formation and nuclear localization of the TIM-PER complex. Light induces the degradation of TIM, which promotes elimination of PER. Nuclear activity of the heterodimer coordinatively regulates PER and TIM transcription through a negative feedback loop. Behaves as a negative element in circadian transcriptional loop. Does not appear to bind DNA, suggesting indirect transcriptional inhibition. The sequence is that of Period circadian protein (per) from Drosophila virilis (Fruit fly).